Reading from the N-terminus, the 371-residue chain is uncharacterized protein (371 aa).

A helical membrane pass occupies residues 17–33 (FLLFSVVLIIVMTTLVF).

The protein to S.pombe SpBC4C3.08 and SpBC4C3.09.

It localises to the membrane. This is an uncharacterized protein from Schizosaccharomyces pombe (strain 972 / ATCC 24843) (Fission yeast).